The sequence spans 414 residues: Arginine deiminase (414 aa).

The Amidino-cysteine intermediate role is filled by C402.

The protein belongs to the arginine deiminase family.

The protein resides in the cytoplasm. It carries out the reaction L-arginine + H2O = L-citrulline + NH4(+). It functions in the pathway amino-acid degradation; L-arginine degradation via ADI pathway; carbamoyl phosphate from L-arginine: step 1/2. The protein is Arginine deiminase of Oenococcus oeni (strain ATCC BAA-331 / PSU-1).